Reading from the N-terminus, the 234-residue chain is Ribosome maturation protein SDO1 homolog (234 aa).

The protein belongs to the SDO1/SBDS family.

In Archaeoglobus fulgidus (strain ATCC 49558 / DSM 4304 / JCM 9628 / NBRC 100126 / VC-16), this protein is Ribosome maturation protein SDO1 homolog.